Reading from the N-terminus, the 1009-residue chain is MSSRHDKEKGVNVQVLLRCRPFSDDELRSNAPQVLTCNDLQREVAVSQNIAGKHIDRVFTFDKVFGPSAQQKDLYDQAVVPIVNEVLEGFNCTIFAYGQTGTGKTYTMEGECRRSKSAPCGGLPAEAGVIPRAVKQIFDTLEGQQAEYSVKVTFLELYNEEITDLLAPEDLSRVAAEEKQKKPLPLMEDGKGGVLVRGLEEEIVTSANEIFTLLERGSSKRRTAETFLNKQSSRSHSLFSITIHIKEATPEGEELIKCGKLNLVDLAGSENISRSGARDGRAREAGEINKSLLTLGRVISALVEHLGHVPYRDSKLTRLLRDSLGGRTKTCIIATVSPAVHCLEETLSTLDYAHRAKNIRNKPEVNQKMMKSTLIKDLYGEIERLKAEVYASREKNGVYMPKERYYQEESERKVMAEQIEQMGGQIENYQKQLEELQDKYVGQVRECSDLTTKLDITEKNLSQTCKVLASTNEELKKSQYAMKEKDFIISEQKKSENVLVQQACILQSNLEKATKDNSSLHQKIGREDKLSADNRKVVDNYQVELSEQISNLFNRVASCLSQQNVHLQGVNKLSQSRLEAHNKAILEMKKKVKASRDLYSSHLEAVQNVVRLHKANANACLEEVSALTTSSACSIDEFLASGDETTSSLFDELQSALSSHQGEMALFARELRQRFHTTMEQTQEMSEYTSTFFQKLMEESKNAETRAAEANDSQINSIIDFQKTYEAQSKSDTDKLIADLTNLVSSHIRRQHELVDSRLHNFKDAVSSNKTFLDEHVSAVNNLTKDAKRKWETFSMQAENEAREGADFSAAKHCRMELLLQQSVGHAESAFKHCKITHESLKEMTSKQVTDVSSLVRSACDSNEQHDAEVDSARTAAEKDVTKNSDDIIQQIERMSEDEKASVSKILENVRSHEKTLESFQQDQCCQARCIEDKAQETFQQQYMEYEPTGATPTKNEPEIPTKATIESLRAMPIETLVEEFRENNSYESFATKETKPQQLTRSPLSQVN.

A Kinesin motor domain is found at 12 to 359; sequence NVQVLLRCRP…LDYAHRAKNI (348 aa). An ATP-binding site is contributed by 98–105; that stretch reads GQTGTGKT. Residues 406–526 adopt a coiled-coil conformation; the sequence is YQEESERKVM…NSSLHQKIGR (121 aa). Disordered stretches follow at residues 862–882 and 987–1009; these read SNEQHDAEVDSARTAAEKDVT and YESFATKETKPQQLTRSPLSQVN. 2 stretches are compositionally biased toward basic and acidic residues: residues 863–882 and 987–996; these read NEQHDAEVDSARTAAEKDVT and YESFATKETK. Residues 997–1009 are compositionally biased toward polar residues; that stretch reads PQQLTRSPLSQVN.

It belongs to the TRAFAC class myosin-kinesin ATPase superfamily. Kinesin family. KIN-5/BimC subfamily.

The protein localises to the cytoplasm. Its subcellular location is the cytoskeleton. It is found in the spindle. In terms of biological role, responsible for microtubule translocation. May be important for the organization of phragmoplast-specific arrays of microtubules. Plays an essential role in stabilizing the mitotic spindle. Required during mitotic cytokinesis. This chain is Kinesin-like protein KIN-5C, found in Arabidopsis thaliana (Mouse-ear cress).